The chain runs to 113 residues: Tyrosine-protein phosphatase 15 (113 aa).

Residues 1-113 form the Tyrosine-protein phosphatase domain; sequence WRMVYDNNVN…RSTGDGVALI (113 aa).

Belongs to the protein-tyrosine phosphatase family.

The enzyme catalyses O-phospho-L-tyrosyl-[protein] + H2O = L-tyrosyl-[protein] + phosphate. The polypeptide is Tyrosine-protein phosphatase 15 (STY-15) (Styela plicata (Wrinkled sea squirt)).